The sequence spans 280 residues: Extracellular metalloprotease GLRG_06286 (280 aa).

An N-terminal signal peptide occupies residues 1–17 (MQVTFTLVAALAGMASA). N-linked (GlcNAc...) asparagine glycosylation is present at N51. Position 196 (H196) interacts with Zn(2+). E197 is an active-site residue. Position 200 (H200) interacts with Zn(2+). The disordered stretch occupies residues 217-236 (DSIADTPAQSSPSSGCPVGR). C232 and C259 are disulfide-bonded.

It belongs to the peptidase M43B family.

The protein resides in the secreted. Secreted metalloproteinase that allows assimilation of proteinaceous substrates. The polypeptide is Extracellular metalloprotease GLRG_06286 (Colletotrichum graminicola (strain M1.001 / M2 / FGSC 10212) (Maize anthracnose fungus)).